A 536-amino-acid chain; its full sequence is Octopamine receptor beta-2R (536 aa).

The interval 1-26 (MLLCDGLGPEPPRQRHRNRTSAARIR) is disordered. Residues 1 to 157 (MLLCDGLGPE…LDNIVWVFKA (157 aa)) lie on the Extracellular side of the membrane. A compositionally biased stretch (basic residues) spans 14–26 (QRHRNRTSAARIR). 4 N-linked (GlcNAc...) asparagine glycosylation sites follow: N18, N92, N113, and N126. The chain crosses the membrane as a helical span at residues 158–178 (FVMLLIIIAAICGNLLVIISV). Residues 179 to 190 (MRVRKLRVITNY) are Cytoplasmic-facing. Residues 191–211 (FVVSLAMADIMVAIMAMTFNF) traverse the membrane as a helical segment. Residues 212–233 (SVQVTGRWNFSPFLCDLWNSLD) lie on the Extracellular side of the membrane. The chain crosses the membrane as a helical span at residues 234–256 (VYFSTASILHLCCISVDRYYAIV). At 257–270 (KPLKYPISMTKRVV) the chain is on the cytoplasmic side. The chain crosses the membrane as a helical span at residues 271-291 (GIMLLNTWISPALLSFLPIFI). Over 292 to 320 (GWYTTPQHQQFVIQNPTQCSFVVNKYYAV) the chain is Extracellular. A helical transmembrane segment spans residues 321–341 (ISSSISFWIPCTIMIFTYLAI). At 342-412 (FREANRQEKQ…MKREHKAART (71 aa)) the chain is on the cytoplasmic side. A helical membrane pass occupies residues 413–433 (LGIIMGTFILCWLPFFLWYTL). The Extracellular portion of the chain corresponds to 434 to 444 (SMTCEECQVPD). The helical transmembrane segment at 445-465 (IVVSILFWIGYFNSTLNPLIY) threads the bilayer. Over 466–536 (AYFNRDFREA…RRQSQMVDNL (71 aa)) the chain is Cytoplasmic.

The protein belongs to the G-protein coupled receptor 1 family. In the adult, expressed in the superior protocerebrum and the optic lobe medulla of the central nervous system, nurse cells of egg chambers in the ovary at oogenic stages 1-10, and spermatogonia and spermatocytes in the testis. Expressed in the oviduct epithelium. Also expressed in the spermatheca. Expressed in embryonic and larval ventral nerve cord and brain lobe, embryonic and larval salivary glands and larval imaginal disk and midgut. Also expressed in larval synaptic boutons.

It is found in the cell membrane. Functionally, autoreceptor for octopamine (OA), which is a neurotransmitter, neurohormone, and neuromodulator in invertebrates. Essential for ovulation and fertilization. During ovulation it mediates the OA-induced relaxation of the oviduct visceral muscles, by increasing cAMP levels and activating effectors such as calmodulin-dependent kinase II (CaMKII) and cAMP-dependent protein kinase A (PKA) pathways. Positively regulates synaptic growth; an action that is antagonized by Octbeta1R. This is Octopamine receptor beta-2R from Drosophila melanogaster (Fruit fly).